Here is a 29-residue protein sequence, read N- to C-terminus: Cytochrome b6-f complex subunit 8 (29 aa).

A helical transmembrane segment spans residues 3 to 23 (IVSLGWAFLMVVFSFSLSLVV).

Belongs to the PetN family. The 4 large subunits of the cytochrome b6-f complex are cytochrome b6, subunit IV (17 kDa polypeptide, PetD), cytochrome f and the Rieske protein, while the 4 small subunits are PetG, PetL, PetM and PetN. The complex functions as a dimer.

It localises to the plastid. The protein localises to the chloroplast thylakoid membrane. Component of the cytochrome b6-f complex, which mediates electron transfer between photosystem II (PSII) and photosystem I (PSI), cyclic electron flow around PSI, and state transitions. The protein is Cytochrome b6-f complex subunit 8 of Chlorokybus atmophyticus (Soil alga).